Reading from the N-terminus, the 227-residue chain is Cytochrome c oxidase subunit 2 (227 aa).

Residues 1–26 (MATWSNLSIQDGASPLMEQLSFFHDD) are Mitochondrial intermembrane-facing. Residues 27-48 (HTMVVLLITVIVGYALSYMLFN) traverse the membrane as a helical segment. At 49–62 (AYTNRNMLHGHLIE) the chain is on the mitochondrial matrix side. Residues 63–82 (TIWTALPAITLIFIALPSLR) form a helical membrane-spanning segment. Topologically, residues 83-227 (LLYLLDDSVD…LFIKWLSKMI (145 aa)) are mitochondrial intermembrane. The Cu cation site is built by His-161, Cys-196, Glu-198, Cys-200, His-204, and Met-207. Residue Glu-198 coordinates Mg(2+).

This sequence belongs to the cytochrome c oxidase subunit 2 family. Component of the cytochrome c oxidase (complex IV, CIV), a multisubunit enzyme composed of a catalytic core of 3 subunits and several supernumerary subunits. The complex exists as a monomer or a dimer and forms supercomplexes (SCs) in the inner mitochondrial membrane with ubiquinol-cytochrome c oxidoreductase (cytochrome b-c1 complex, complex III, CIII). Requires Cu cation as cofactor.

Its subcellular location is the mitochondrion inner membrane. It catalyses the reaction 4 Fe(II)-[cytochrome c] + O2 + 8 H(+)(in) = 4 Fe(III)-[cytochrome c] + 2 H2O + 4 H(+)(out). Its function is as follows. Component of the cytochrome c oxidase, the last enzyme in the mitochondrial electron transport chain which drives oxidative phosphorylation. The respiratory chain contains 3 multisubunit complexes succinate dehydrogenase (complex II, CII), ubiquinol-cytochrome c oxidoreductase (cytochrome b-c1 complex, complex III, CIII) and cytochrome c oxidase (complex IV, CIV), that cooperate to transfer electrons derived from NADH and succinate to molecular oxygen, creating an electrochemical gradient over the inner membrane that drives transmembrane transport and the ATP synthase. Cytochrome c oxidase is the component of the respiratory chain that catalyzes the reduction of oxygen to water. Electrons originating from reduced cytochrome c in the intermembrane space (IMS) are transferred via the dinuclear copper A center (CU(A)) of subunit 2 and heme A of subunit 1 to the active site in subunit 1, a binuclear center (BNC) formed by heme A3 and copper B (CU(B)). The BNC reduces molecular oxygen to 2 water molecules using 4 electrons from cytochrome c in the IMS and 4 protons from the mitochondrial matrix. This is Cytochrome c oxidase subunit 2 (COII) from Schistocerca gregaria (Desert locust).